The following is a 248-amino-acid chain: Putative eukaryotic initiation factor 4A-like protein (248 aa).

Positions 14-42 match the Q motif motif; the sequence is VGFASLGLNEQLINNIKRYGITKLTPFQM. Residues 45–239 enclose the Helicase ATP-binding domain; that stretch reads IKEIKENSNV…NTFIKIPKII (195 aa). 58-65 is a binding site for ATP; that stretch reads SIEGTGRT. A DEAD box motif is present at residues 185–188; sequence DELD.

This sequence belongs to the DEAD box helicase family. eIF4A subfamily.

This chain is Putative eukaryotic initiation factor 4A-like protein, found in Dictyostelium discoideum (Social amoeba).